The chain runs to 585 residues: MDSSTANSSGTAISKAEWKPDQSSLECNDCQLPFTLIRRRHHCRKCGSIFCDSCSSFYSILPIEYGYTGQQRLCRSCNNSFEQKKQYFETDALVAQFQLRSTAQFEYSKPLQDIGHTKHGLRKSYCMAKNSMGGGEECVVSIITPTPSSCPWSMSNEKKKRKFEKTLLSLKHPYILTPINVEVSGANDKILVIRTFFKQGSLRDQVYKSKPLSPYDTKYIYKQPKSSSSSSSSSSSSSQSQSVLPIKSIQKYCKQILESLLYLKSKGIQFSHLHLSNILINQSNDTCQLVDIENCLLGMKPLFNDYIYGIGLPQSFKDNLEVICFGHCLFEMIIGIPLGDHSNINSFIPLFPDKVFLLLQQIFSEKTPTLEELVKNPWFEVTTTIEQQSLQNGKLKKSQLTFIKDNSNKFESPKVSLSGSFSSSNISKLSSSSSNNNSNNNNNNNNNSNTFNNISSNDDKRKSMKLPSSTSLLNNSFNLSNNNNPSSPSTSTISPNSSLISSPPKTPILQTFTPPPPPPPPKSAPPPPPPPSSSKLPPSSSSRNSLLESIRNADNAKKLKKTTPNTKPKSSIGPHSLKPSSTKKK.

An FYVE-type zinc finger spans residues 21–82; it reads DQSSLECNDC…LCRSCNNSFE (62 aa). Positions 27, 30, 43, 46, 51, 54, 74, and 77 each coordinate Zn(2+). One can recognise a Protein kinase domain in the interval 108-478; sequence SKPLQDIGHT…STSLLNNSFN (371 aa). Low complexity-rich tracts occupy residues 426–456 and 466–503; these read ISKLSSSSSNNNSNNNNNNNNNSNTFNNISS and LPSSTSLLNNSFNLSNNNNPSSPSTSTISPNSSLISSP. The tract at residues 426–585 is disordered; sequence ISKLSSSSSN…SLKPSSTKKK (160 aa). Residues 513–532 are compositionally biased toward pro residues; the sequence is TPPPPPPPPKSAPPPPPPPS. A compositionally biased stretch (low complexity) spans 533–542; it reads SSKLPPSSSS. Residues 542–562 enclose the WH2 domain; that stretch reads SRNSLLESIRNADNAKKLKKT.

This sequence belongs to the protein kinase superfamily. Ser/Thr protein kinase family.

The sequence is that of Probable inactive serine/threonine-protein kinase slob1 (slob1) from Dictyostelium discoideum (Social amoeba).